The chain runs to 136 residues: Small ribosomal subunit protein uS9 (136 aa).

The disordered stretch occupies residues 97–136 (SPDNRKPLKTEGHLSRDPRAKERRKYGLKKARKAPQFSKR). Over residues 98–116 (PDNRKPLKTEGHLSRDPRA) the composition is skewed to basic and acidic residues. Residues 117-136 (KERRKYGLKKARKAPQFSKR) show a composition bias toward basic residues.

It belongs to the universal ribosomal protein uS9 family.

The protein is Small ribosomal subunit protein uS9 of Prochlorococcus marinus (strain MIT 9312).